Here is an 86-residue protein sequence, read N- to C-terminus: Large ribosomal subunit protein bL27 (86 aa).

Residues 1–24 form a disordered region; it reads MATKKAGGSSRNGRDSAGRRLGVK.

The protein belongs to the bacterial ribosomal protein bL27 family.

The sequence is that of Large ribosomal subunit protein bL27 from Rickettsia felis (strain ATCC VR-1525 / URRWXCal2) (Rickettsia azadi).